Here is a 168-residue protein sequence, read N- to C-terminus: Protein C2-DOMAIN ABA-RELATED 3 (168 aa).

In terms of domain architecture, C2 spans Met-1–Gly-106. Residues Arg-24, Asp-25, Asp-30, Asp-76, His-77, Asp-78, and Asp-84 each contribute to the Ca(2+) site.

It belongs to the plant CAR protein family. Binds to PYR/PYL/RCAR abscisic acid intracellular receptors in an ABA-independent manner, both at the plasma membrane and in the nucleus. Requires Ca(2+) as cofactor.

The protein resides in the cell membrane. Its subcellular location is the nucleus. Stimulates the GTPase/ATPase activities of Obg-like ATPases. Mediates the transient calcium-dependent interaction of PYR/PYL/RCAR abscisic acid (ABA) receptors with the plasma membrane and thus regulates ABA sensitivity. This is Protein C2-DOMAIN ABA-RELATED 3 from Arabidopsis thaliana (Mouse-ear cress).